A 198-amino-acid polypeptide reads, in one-letter code: NAD(P)H dehydrogenase (quinone) (198 aa).

Positions 4-189 (ILVLYYSMYG…AIARYQGEHV (186 aa)) constitute a Flavodoxin-like domain. FMN contacts are provided by residues 10–15 (SMYGHI) and 78–80 (TRF). Tyr12 lines the NAD(+) pocket. Trp98 contributes to the substrate binding site. Residues 113 to 118 (STGTGG) and His133 each bind FMN.

Belongs to the WrbA family. FMN serves as cofactor.

The enzyme catalyses a quinone + NADH + H(+) = a quinol + NAD(+). It carries out the reaction a quinone + NADPH + H(+) = a quinol + NADP(+). The protein is NAD(P)H dehydrogenase (quinone) of Klebsiella pneumoniae (strain 342).